Consider the following 354-residue polypeptide: Thymidylate synthase (354 aa).

Residues Met-1–Gly-32 are disordered. Arg-53 serves as a coordination point for dUMP. At Ser-117 the chain carries Phosphoserine. Arg-178–Arg-179 provides a ligand contact to dUMP. Cys-198 acts as the Nucleophile in catalysis. DUMP is bound by residues Arg-218–Asp-221, Asn-229, and His-259–Tyr-261. Asp-221 contributes to the (6R)-5,10-methylene-5,6,7,8-tetrahydrofolate binding site. Lys-349 is covalently cross-linked (Glycyl lysine isopeptide (Lys-Gly) (interchain with G-Cter in SUMO2)). Ala-353 contributes to the (6R)-5,10-methylene-5,6,7,8-tetrahydrofolate binding site.

Belongs to the thymidylate synthase family. As to quaternary structure, homodimer.

The protein resides in the nucleus. It is found in the cytoplasm. Its subcellular location is the mitochondrion. It localises to the mitochondrion matrix. The protein localises to the mitochondrion inner membrane. The enzyme catalyses dUMP + (6R)-5,10-methylene-5,6,7,8-tetrahydrofolate = 7,8-dihydrofolate + dTMP. It functions in the pathway pyrimidine metabolism; dTTP biosynthesis. In terms of biological role, catalyzes the reductive methylation of 2'-deoxyuridine 5'-monophosphate (dUMP) to thymidine 5'-monophosphate (dTMP), using the cosubstrate, 5,10- methylenetetrahydrofolate (CH2H4folate) as a 1-carbon donor and reductant and contributes to the de novo mitochondrial thymidylate biosynthesis pathway. The protein is Thymidylate synthase (TYMS) of Bos taurus (Bovine).